Reading from the N-terminus, the 363-residue chain is 5-formaminoimidazole-4-carboxamide-1-(beta)-D-ribofuranosyl 5'-monophosphate synthetase (363 aa).

The 5-amino-1-(5-phospho-beta-D-ribosyl)imidazole-4-carboxamide site is built by His29 and Ser96. Positions 118–354 (RDILRWEAER…ISREIKNAIE (237 aa)) constitute an ATP-grasp domain. Residues 148-210 (PEDI…TNFC) and Glu232 contribute to the ATP site. Asn260 serves as a coordination point for 5-amino-1-(5-phospho-beta-D-ribosyl)imidazole-4-carboxamide. 2 residues coordinate Mg(2+): Gln299 and Glu312.

Belongs to the phosphohexose mutase family. It depends on Mg(2+) as a cofactor. Requires Mn(2+) as cofactor.

It catalyses the reaction 5-amino-1-(5-phospho-beta-D-ribosyl)imidazole-4-carboxamide + formate + ATP = 5-formamido-1-(5-phospho-D-ribosyl)imidazole-4-carboxamide + ADP + phosphate. Its pathway is purine metabolism; IMP biosynthesis via de novo pathway; 5-formamido-1-(5-phospho-D-ribosyl)imidazole-4-carboxamide from 5-amino-1-(5-phospho-D-ribosyl)imidazole-4-carboxamide (formate route): step 1/1. Its function is as follows. Catalyzes the ATP- and formate-dependent formylation of 5-aminoimidazole-4-carboxamide-1-beta-d-ribofuranosyl 5'-monophosphate (AICAR) to 5-formaminoimidazole-4-carboxamide-1-beta-d-ribofuranosyl 5'-monophosphate (FAICAR) in the absence of folates. The polypeptide is 5-formaminoimidazole-4-carboxamide-1-(beta)-D-ribofuranosyl 5'-monophosphate synthetase (Methanosphaera stadtmanae (strain ATCC 43021 / DSM 3091 / JCM 11832 / MCB-3)).